The chain runs to 301 residues: UDP-3-O-acyl-N-acetylglucosamine deacetylase (301 aa).

The Zn(2+) site is built by His-81, His-237, and Asp-241. Catalysis depends on His-264, which acts as the Proton donor.

The protein belongs to the LpxC family. It depends on Zn(2+) as a cofactor.

It carries out the reaction a UDP-3-O-[(3R)-3-hydroxyacyl]-N-acetyl-alpha-D-glucosamine + H2O = a UDP-3-O-[(3R)-3-hydroxyacyl]-alpha-D-glucosamine + acetate. It participates in glycolipid biosynthesis; lipid IV(A) biosynthesis; lipid IV(A) from (3R)-3-hydroxytetradecanoyl-[acyl-carrier-protein] and UDP-N-acetyl-alpha-D-glucosamine: step 2/6. Catalyzes the hydrolysis of UDP-3-O-myristoyl-N-acetylglucosamine to form UDP-3-O-myristoylglucosamine and acetate, the committed step in lipid A biosynthesis. This Leptospira interrogans serogroup Icterohaemorrhagiae serovar copenhageni (strain Fiocruz L1-130) protein is UDP-3-O-acyl-N-acetylglucosamine deacetylase.